The following is an 86-amino-acid chain: Putative membrane protein insertion efficiency factor (86 aa).

Residues 66-86 (PLHEGGDDPVPPRKNDDNREN) form a disordered region.

This sequence belongs to the UPF0161 family.

It is found in the cell inner membrane. Functionally, could be involved in insertion of integral membrane proteins into the membrane. The polypeptide is Putative membrane protein insertion efficiency factor (Proteus mirabilis (strain HI4320)).